A 266-amino-acid chain; its full sequence is Vitamin B12-binding protein (266 aa).

Positions Met-1 to Ala-22 are cleaved as a signal peptide. The Fe/B12 periplasmic-binding domain occupies Arg-25–Asp-266. Cyanocob(III)alamin contacts are provided by residues Tyr-50 and Asp-242 to Arg-246. The cysteines at positions 183 and 259 are disulfide-linked.

The protein belongs to the BtuF family. In terms of assembly, the complex is composed of two ATP-binding proteins (BtuD), two transmembrane proteins (BtuC) and a solute-binding protein (BtuF).

It is found in the periplasm. Its function is as follows. Part of the ABC transporter complex BtuCDF involved in vitamin B12 import. Binds vitamin B12 and delivers it to the periplasmic surface of BtuC. The chain is Vitamin B12-binding protein from Shigella flexneri.